We begin with the raw amino-acid sequence, 144 residues long: Large ribosomal subunit protein uL13 (144 aa).

Belongs to the universal ribosomal protein uL13 family. In terms of assembly, part of the 50S ribosomal subunit.

Its function is as follows. This protein is one of the early assembly proteins of the 50S ribosomal subunit, although it is not seen to bind rRNA by itself. It is important during the early stages of 50S assembly. In Nitratidesulfovibrio vulgaris (strain ATCC 29579 / DSM 644 / CCUG 34227 / NCIMB 8303 / VKM B-1760 / Hildenborough) (Desulfovibrio vulgaris), this protein is Large ribosomal subunit protein uL13.